Reading from the N-terminus, the 38-residue chain is Cytochrome b6-f complex subunit 5 (38 aa).

The helical transmembrane segment at 5–25 threads the bilayer; the sequence is LVLGLVMGLVPITLAGLFVAA.

This sequence belongs to the PetG family. As to quaternary structure, the 4 large subunits of the cytochrome b6-f complex are cytochrome b6, subunit IV (17 kDa polypeptide, PetD), cytochrome f and the Rieske protein, while the 4 small subunits are PetG, PetL, PetM and PetN. The complex functions as a dimer.

The protein localises to the cellular thylakoid membrane. In terms of biological role, component of the cytochrome b6-f complex, which mediates electron transfer between photosystem II (PSII) and photosystem I (PSI), cyclic electron flow around PSI, and state transitions. PetG is required for either the stability or assembly of the cytochrome b6-f complex. The sequence is that of Cytochrome b6-f complex subunit 5 from Gloeothece citriformis (strain PCC 7424) (Cyanothece sp. (strain PCC 7424)).